Consider the following 127-residue polypeptide: Aspartate 1-decarboxylase (127 aa).

Ser-25 acts as the Schiff-base intermediate with substrate; via pyruvic acid in catalysis. A Pyruvic acid (Ser) modification is found at Ser-25. Thr-57 is a binding site for substrate. Tyr-58 acts as the Proton donor in catalysis. A substrate-binding site is contributed by 73–75 (GAA).

This sequence belongs to the PanD family. Heterooctamer of four alpha and four beta subunits. Pyruvate is required as a cofactor. In terms of processing, is synthesized initially as an inactive proenzyme, which is activated by self-cleavage at a specific serine bond to produce a beta-subunit with a hydroxyl group at its C-terminus and an alpha-subunit with a pyruvoyl group at its N-terminus.

Its subcellular location is the cytoplasm. The enzyme catalyses L-aspartate + H(+) = beta-alanine + CO2. The protein operates within cofactor biosynthesis; (R)-pantothenate biosynthesis; beta-alanine from L-aspartate: step 1/1. Catalyzes the pyruvoyl-dependent decarboxylation of aspartate to produce beta-alanine. The polypeptide is Aspartate 1-decarboxylase (Bacillus licheniformis (strain ATCC 14580 / DSM 13 / JCM 2505 / CCUG 7422 / NBRC 12200 / NCIMB 9375 / NCTC 10341 / NRRL NRS-1264 / Gibson 46)).